The chain runs to 1178 residues: Pyruvate carboxylase, mitochondrial (1178 aa).

A mitochondrion-targeting transit peptide spans 1–20 (MLKFQTVRGGLRLLGVRRSS). Serine 21 is modified (phosphoserine). Residues lysine 35 and lysine 39 each carry the N6-acetyllysine modification. Positions 36-486 (PIKKVMVANR…DTQFIDENPE (451 aa)) constitute a Biotin carboxylation domain. Lysine 79 is modified (N6-acetyllysine; alternate). Lysine 79 is subject to N6-succinyllysine; alternate. An N6-acetyllysine mark is found at lysine 148 and lysine 152. Lysine 152 and glutamate 236 together coordinate ATP. The region spanning 156–353 (RAIAIAAGVP…LVHAQIHVSE (198 aa)) is the ATP-grasp domain. Lysine 241 is modified (N6-acetyllysine). ATP is bound at residue histidine 271. Lysine 297, lysine 316, and lysine 319 each carry N6-acetyllysine. Arginine 328 is an active-site residue. An N6-acetyllysine modification is found at lysine 434. Lysine 442 is subject to N6-succinyllysine. The 270-residue stretch at 563-832 (LLLMDTTFRD…DTEVPLERVF (270 aa)) folds into the Pyruvate carboxyltransferase domain. Residue 571–575 (RDAHQ) participates in substrate binding. Aspartate 572 lines the Mn(2+) pocket. Lysine 589 bears the N6-acetyllysine mark. Arginine 644 serves as a coordination point for substrate. Residues lysine 661 and lysine 717 each carry the N6-acetyllysine modification. Residue lysine 741 participates in Mn(2+) binding. Residue lysine 741 is modified to N6-carboxylysine. Lysine 748 carries the N6-acetyllysine modification. Residues histidine 771 and histidine 773 each coordinate Mn(2+). Lysine 892 is modified (N6-acetyllysine). Residue threonine 908 coordinates substrate. N6-acetyllysine is present on lysine 969. Lysine 988 carries the post-translational modification N6-acetyllysine; alternate. At lysine 988 the chain carries N6-succinyllysine; alternate. Lysine 992 carries the N6-acetyllysine modification. Residue threonine 1003 is modified to Phosphothreonine. Lysine 1061, lysine 1090, and lysine 1124 each carry N6-acetyllysine. The 70-residue stretch at 1109–1178 (KGQIGAPMPG…EGDDLILEIE (70 aa)) folds into the Biotinyl-binding domain. N6-biotinyllysine is present on lysine 1144.

Homotetramer. Interacts (via the biotin carboxylation domain) with SIRT4. Biotin serves as cofactor. The cofactor is Mn(2+). Acetylation of Lys-316 is observed in liver mitochondria from fasted mice but not from fed mice. Acetylation of Lys-748 might play a role in catalytic activity regulation. As to expression, liver, kidney, adipose tissue, liver and brain.

It is found in the mitochondrion matrix. It catalyses the reaction hydrogencarbonate + pyruvate + ATP = oxaloacetate + ADP + phosphate + H(+). The protein operates within carbohydrate biosynthesis; gluconeogenesis. Its function is as follows. Pyruvate carboxylase catalyzes a 2-step reaction, involving the ATP-dependent carboxylation of the covalently attached biotin in the first step and the transfer of the carboxyl group to pyruvate in the second. Catalyzes in a tissue specific manner, the initial reactions of glucose (liver, kidney) and lipid (adipose tissue, liver, brain) synthesis from pyruvate. The sequence is that of Pyruvate carboxylase, mitochondrial (Pc) from Mus musculus (Mouse).